The following is a 481-amino-acid chain: Aspartyl/glutamyl-tRNA(Asn/Gln) amidotransferase subunit B (481 aa).

The protein belongs to the GatB/GatE family. GatB subfamily. Heterotrimer of A, B and C subunits.

The catalysed reaction is L-glutamyl-tRNA(Gln) + L-glutamine + ATP + H2O = L-glutaminyl-tRNA(Gln) + L-glutamate + ADP + phosphate + H(+). The enzyme catalyses L-aspartyl-tRNA(Asn) + L-glutamine + ATP + H2O = L-asparaginyl-tRNA(Asn) + L-glutamate + ADP + phosphate + 2 H(+). Its function is as follows. Allows the formation of correctly charged Asn-tRNA(Asn) or Gln-tRNA(Gln) through the transamidation of misacylated Asp-tRNA(Asn) or Glu-tRNA(Gln) in organisms which lack either or both of asparaginyl-tRNA or glutaminyl-tRNA synthetases. The reaction takes place in the presence of glutamine and ATP through an activated phospho-Asp-tRNA(Asn) or phospho-Glu-tRNA(Gln). This chain is Aspartyl/glutamyl-tRNA(Asn/Gln) amidotransferase subunit B, found in Ectopseudomonas mendocina (strain ymp) (Pseudomonas mendocina).